A 127-amino-acid polypeptide reads, in one-letter code: Evasin P467 (127 aa).

The first 21 residues, 1-21 (MALKACITVIAVVYVVQVVRG), serve as a signal peptide directing secretion. 4 disulfides stabilise this stretch: Cys42–Cys63, Cys59–Cys100, Cys76–Cys105, and Cys95–Cys114. Residues Asn49 and Asn94 are each glycosylated (N-linked (GlcNAc...) asparagine).

Its subcellular location is the secreted. Its function is as follows. Salivary chemokine-binding protein which binds to host chemokines CCL1, CCL2, CCL3 and CCL5. This is Evasin P467 from Rhipicephalus pulchellus (Yellow backed tick).